A 621-amino-acid chain; its full sequence is Auxin response factor 13 (621 aa).

The segment at residues 124-228 (FSKILTASDV…ELRFGIRRAK (105 aa)) is a DNA-binding region (TF-B3). Residues 508-600 (RSRIKVHMQG…EIKKMKLKNK (93 aa)) form the PB1 domain.

This sequence belongs to the ARF family. As to quaternary structure, homodimers and heterodimers.

The protein resides in the nucleus. In terms of biological role, auxin response factors (ARFs) are transcriptional factors that bind specifically to the DNA sequence 5'-TGTCTC-3' found in the auxin-responsive promoter elements (AuxREs). Could act as transcriptional activator or repressor. Formation of heterodimers with Aux/IAA proteins may alter their ability to modulate early auxin response genes expression. The protein is Auxin response factor 13 (ARF13) of Arabidopsis thaliana (Mouse-ear cress).